A 549-amino-acid polypeptide reads, in one-letter code: Oxygen-dependent choline dehydrogenase (549 aa).

Asp4 to Glu33 is a binding site for FAD. His465 (proton acceptor) is an active-site residue.

The protein belongs to the GMC oxidoreductase family. FAD serves as cofactor.

It carries out the reaction choline + A = betaine aldehyde + AH2. The enzyme catalyses betaine aldehyde + NAD(+) + H2O = glycine betaine + NADH + 2 H(+). It functions in the pathway amine and polyamine biosynthesis; betaine biosynthesis via choline pathway; betaine aldehyde from choline (cytochrome c reductase route): step 1/1. Functionally, involved in the biosynthesis of the osmoprotectant glycine betaine. Catalyzes the oxidation of choline to betaine aldehyde and betaine aldehyde to glycine betaine at the same rate. The protein is Oxygen-dependent choline dehydrogenase of Sinorhizobium medicae (strain WSM419) (Ensifer medicae).